Reading from the N-terminus, the 392-residue chain is Acetyl-CoA acetyltransferase (392 aa).

Cysteine 87 (acyl-thioester intermediate) is an active-site residue. Active-site proton acceptor residues include histidine 348 and cysteine 378.

This sequence belongs to the thiolase-like superfamily. Thiolase family.

The protein localises to the cytoplasm. The enzyme catalyses 2 acetyl-CoA = acetoacetyl-CoA + CoA. The protein operates within metabolic intermediate biosynthesis; (R)-mevalonate biosynthesis; (R)-mevalonate from acetyl-CoA: step 1/3. Involved in the production of polyhydroxyalkonic acids (PHAs), composed primarily of 3-hydroxybutyric acid (3HB) and 3-hydroxyvaleric acid (3HV). The protein is Acetyl-CoA acetyltransferase (phaA) of Chromobacterium violaceum (strain ATCC 12472 / DSM 30191 / JCM 1249 / CCUG 213 / NBRC 12614 / NCIMB 9131 / NCTC 9757 / MK).